Here is a 117-residue protein sequence, read N- to C-terminus: Immunoglobulin heavy variable 4-38-2 (117 aa).

Residues 1 to 19 form the signal peptide; the sequence is MKHLWFFLLLVAAPRWVLS. The interval 20–44 is framework-1; it reads QVQLQESGPGLVKPSETLSLTCTVS. Positions 20 to 117 constitute an Ig-like domain; sequence QVQLQESGPG…ADTAVYYCAR (98 aa). Cysteines 41 and 115 form a disulfide. The segment at 45-53 is complementarity-determining-1; that stretch reads GYSISSGYY. A framework-2 region spans residues 54-70; sequence WGWIRQPPGKGLEWIGS. The tract at residues 71-77 is complementarity-determining-2; it reads IYHSGST. The segment at 78 to 115 is framework-3; sequence YYNPSLKSRVTISVDTSKNQFSLKLSSVTAADTAVYYC. The segment at 116–117 is complementarity-determining-3; sequence AR.

Immunoglobulins are composed of two identical heavy chains and two identical light chains; disulfide-linked.

It localises to the secreted. The protein localises to the cell membrane. Functionally, v region of the variable domain of immunoglobulin heavy chains that participates in the antigen recognition. Immunoglobulins, also known as antibodies, are membrane-bound or secreted glycoproteins produced by B lymphocytes. In the recognition phase of humoral immunity, the membrane-bound immunoglobulins serve as receptors which, upon binding of a specific antigen, trigger the clonal expansion and differentiation of B lymphocytes into immunoglobulins-secreting plasma cells. Secreted immunoglobulins mediate the effector phase of humoral immunity, which results in the elimination of bound antigens. The antigen binding site is formed by the variable domain of one heavy chain, together with that of its associated light chain. Thus, each immunoglobulin has two antigen binding sites with remarkable affinity for a particular antigen. The variable domains are assembled by a process called V-(D)-J rearrangement and can then be subjected to somatic hypermutations which, after exposure to antigen and selection, allow affinity maturation for a particular antigen. The protein is Immunoglobulin heavy variable 4-38-2 of Homo sapiens (Human).